Here is a 365-residue protein sequence, read N- to C-terminus: 3-isopropylmalate dehydrogenase (365 aa).

NAD(+) is bound at residue Gly76–Glu89. Arg96, Arg106, Arg134, and Asp224 together coordinate substrate. Residues Asp224, Asp248, and Asp252 each coordinate Mg(2+). Gly282 to Asn294 lines the NAD(+) pocket.

It belongs to the isocitrate and isopropylmalate dehydrogenases family. LeuB type 1 subfamily. In terms of assembly, homodimer. Mg(2+) serves as cofactor. It depends on Mn(2+) as a cofactor.

Its subcellular location is the cytoplasm. It carries out the reaction (2R,3S)-3-isopropylmalate + NAD(+) = 4-methyl-2-oxopentanoate + CO2 + NADH. It functions in the pathway amino-acid biosynthesis; L-leucine biosynthesis; L-leucine from 3-methyl-2-oxobutanoate: step 3/4. In terms of biological role, catalyzes the oxidation of 3-carboxy-2-hydroxy-4-methylpentanoate (3-isopropylmalate) to 3-carboxy-4-methyl-2-oxopentanoate. The product decarboxylates to 4-methyl-2 oxopentanoate. The protein is 3-isopropylmalate dehydrogenase (leuB) of Bacillus subtilis (strain 168).